Reading from the N-terminus, the 302-residue chain is uncharacterized protein (302 aa).

The next 10 membrane-spanning stretches (helical) occupy residues 13–32 (GILL…IYFK), 42–64 (ILSH…GRRW), 77–96 (FWLL…IFIW), 106–125 (ASLG…MLFL), 132–150 (LQWF…QLVV), 154–171 (VPIV…YGLL), 183–202 (LFLE…IWLA), 217–239 (NLLL…GAAA), 246–265 (LGFF…VLVY), and 275–297 (ITFA…AGHA). In terms of domain architecture, EamA spans 22–149 (TMWGIAPIYF…AAIGVGIQLV (128 aa)).

Belongs to the EamA transporter family.

Its subcellular location is the cell membrane. This is an uncharacterized protein from Vibrio cholerae serotype O1 (strain ATCC 39315 / El Tor Inaba N16961).